We begin with the raw amino-acid sequence, 90 residues long: MTRTVNCRKYNQELPGLERPPFPGQKGEDIYNNISRQAWDDWQKHQTMLINERRLNMMNAEDRKFLQGEMDKFFSGEDYAKAEGYVPPSE.

The protein belongs to the Fe(2+)-trafficking protein family.

In terms of biological role, could be a mediator in iron transactions between iron acquisition and iron-requiring processes, such as synthesis and/or repair of Fe-S clusters in biosynthetic enzymes. This Stutzerimonas stutzeri (strain A1501) (Pseudomonas stutzeri) protein is Probable Fe(2+)-trafficking protein.